A 37-amino-acid polypeptide reads, in one-letter code: MAFFQKLTGQEQVNRDLLLLLCIGGFYTLGVSLSNTF.

This is an uncharacterized protein from Bacillus caldotenax.